A 329-amino-acid polypeptide reads, in one-letter code: (12E)-labda-8(17),12,14-triene synthase (329 aa).

Positions 90 and 95 each coordinate Mg(2+). The DDXXXE motif signature appears at 90–95 (DDMHGE). Arginine 184 lines the substrate pocket. Residues asparagine 230 and serine 234 each contribute to the Mg(2+) site. Positions 230 to 238 (NDLASYERE) match the NXXXSXXXE motif motif. Arginine 237 provides a ligand contact to substrate. Glutamate 238 contributes to the Mg(2+) binding site. 316–317 (RY) contacts substrate.

This sequence belongs to the terpene synthase family. The cofactor is Mg(2+).

It catalyses the reaction (+)-copalyl diphosphate = (12E)-labda-8(17),12,14-triene + diphosphate. Functionally, involved in the biosynthesis of the mercapturic acid derivative diterpene cyslabdan A, a potentiator of the beta-lactam antibiotic imipenem. Catalyzes the conversion of (+)-copalyl diphosphate to yield labda-8(17),12(E),14-triene (biformene). This Streptomyces cyslabdanicus protein is (12E)-labda-8(17),12,14-triene synthase.